A 453-amino-acid chain; its full sequence is DDB1- and CUL4-associated factor 12 (453 aa).

The span at 1-12 (MARKVVSRKRKA) shows a compositional bias: basic residues. The disordered stretch occupies residues 1 to 34 (MARKVVSRKRKAPASPGAGSDAQGPQFGWDHSLH). The segment at 1-38 (MARKVVSRKRKAPASPGAGSDAQGPQFGWDHSLHKRKR) is required for nuclear location and interaction with MOV10. A Phosphoserine modification is found at Ser15. WD repeat units lie at residues 81 to 122 (EREF…TSQI), 123 to 175 (TKIP…TLDP), 176 to 242 (VCVG…ALKD), 243 to 286 (IPKE…NTLS), 287 to 331 (KLLS…SYNV), and 332 to 366 (KSVCSRERGSGIRSVSFYEHIITVGTGQGSLLFYD).

This sequence belongs to the WD repeat DCAF12 family. In terms of assembly, component of the DCX(DCAF12) E3 ubiquitin ligase complex, at least composed of CUL4 (CUL4A or CUL4B), DDB1, DCAF12 and RBX1. As to expression, highly expressed in lung cancer tissues and some cancer cell lines. Restricted expression in normal testis.

Its subcellular location is the cytoplasm. It localises to the cytoskeleton. The protein resides in the microtubule organizing center. The protein localises to the centrosome. It is found in the nucleus. The protein operates within protein modification; protein ubiquitination. In terms of biological role, substrate-recognition component of a DCX (DDB1-CUL4-X-box) E3 ubiquitin-protein ligase complex of the DesCEND (destruction via C-end degrons) pathway, which recognizes a C-degron located at the extreme C terminus of target proteins, leading to their ubiquitination and degradation. The C-degron recognized by the DesCEND pathway is usually a motif of less than ten residues and can be present in full-length proteins, truncated proteins or proteolytically cleaved forms. The DCX(DCAF12) complex specifically recognizes proteins with a diglutamate (Glu-Glu) at the C-terminus, such as MAGEA3, MAGEA6 and CCT5, leading to their ubiquitination and degradation. Ubiquitination of MAGEA3, MAGEA6 by DCX(DCAF12) complex is required for starvation-induced autophagy. Also directly recognizes the C-terminal glutamate-leucine (Glu-Leu) degron as an alternative degron in proteins such as MOV10, leading to their ubiquitination and degradation. Controls the protein level of MOV10 during spermatogenesis and in T cells, especially after their activation. The sequence is that of DDB1- and CUL4-associated factor 12 from Homo sapiens (Human).